The chain runs to 92 residues: cAMP-dependent protein kinase inhibitor beta (92 aa).

Residues Met-1–Glu-26 are disordered. Polar residues predominate over residues Pro-7 to Glu-26. Ser-56 carries the post-translational modification Phosphoserine. The segment covering Glu-70–Gly-82 has biased composition (basic and acidic residues). Residues Glu-70 to Lys-92 form a disordered region.

This sequence belongs to the PKI family.

Extremely potent competitive inhibitor of cAMP-dependent protein kinase activity, this protein interacts with the catalytic subunit of the enzyme after the cAMP-induced dissociation of its regulatory chains. This Mus musculus (Mouse) protein is cAMP-dependent protein kinase inhibitor beta (Pkib).